The chain runs to 358 residues: Protein ttm-2 (358 aa).

This sequence belongs to the arrestin family.

Involved in resistance to B.thuringiensis pore-forming toxin Cry5B downstream of the sek-1 and pmk-1 MAPK kinase pathway. This Caenorhabditis elegans protein is Protein ttm-2.